We begin with the raw amino-acid sequence, 513 residues long: Gluconokinase (513 aa).

ATP is bound by residues lysine 16, threonine 261, glycine 300, and 412-416; that span reads GFARS.

It belongs to the FGGY kinase family.

It carries out the reaction D-gluconate + ATP = 6-phospho-D-gluconate + ADP + H(+). It participates in carbohydrate acid metabolism; D-gluconate degradation. Its activity is regulated as follows. Catabolite repression by gluconate. The protein is Gluconokinase (gntK) of Bacillus subtilis (strain 168).